The chain runs to 218 residues: uncharacterized protein (218 aa).

A helical membrane pass occupies residues 11 to 31 (AAGLFPLALMLSGCISYALVS).

Its subcellular location is the membrane. This is an uncharacterized protein from Escherichia coli (strain K12).